We begin with the raw amino-acid sequence, 900 residues long: uncharacterized protein (900 aa).

Residues 1–16 (MGSNKEAKNIDSKNDR) show a composition bias toward basic and acidic residues. Disordered stretches follow at residues 1-84 (MGSN…KLSS), 103-160 (NSSR…PDPS), 512-556 (NFNQ…KKSG), 568-613 (LAST…KSAN), and 648-676 (KRSS…NSFP). A compositionally biased stretch (polar residues) spans 17–27 (GLTSITSNKIS). Residues 30–58 (KAHDNHTSSMITEHKNADKEKGKQEKESR) show a composition bias toward basic and acidic residues. Low complexity-rich tracts occupy residues 63–76 (QSSS…PQVS) and 103–127 (NSSR…QLSK). A Phosphoserine modification is found at S105. Positions 129-143 (GLHHHHTSNNKHSHR) are enriched in basic residues. Residues 528–537 (SSRSLSLPSS) show a composition bias toward low complexity. Positions 543–553 (KRKKSPTKATK) are enriched in basic residues. 2 stretches are compositionally biased toward low complexity: residues 570-601 (STSH…SSPP) and 665-676 (SPISSNSDNSFP).

This is an uncharacterized protein from Saccharomyces cerevisiae (strain ATCC 204508 / S288c) (Baker's yeast).